Here is a 217-residue protein sequence, read N- to C-terminus: E3 ubiquitin-protein ligase znrf2 (217 aa).

2 disordered regions span residues 1 to 27 and 63 to 111; these read MGAK…SATA and QFIS…ERST. A lipid anchor (N-myristoyl glycine) is attached at glycine 2. Residues 68 to 100 are compositionally biased toward polar residues; sequence RTRSVGPSARPQSGINIPNSGAYSSADSGNSTP. The RING-type; atypical zinc-finger motif lies at 174–215; sequence CAICLEELLQGDTIARLPCLCIYHKGCIDEWFEVNRSCPEHP.

It localises to the endosome membrane. The protein resides in the lysosome membrane. Its subcellular location is the presynaptic cell membrane. It catalyses the reaction S-ubiquitinyl-[E2 ubiquitin-conjugating enzyme]-L-cysteine + [acceptor protein]-L-lysine = [E2 ubiquitin-conjugating enzyme]-L-cysteine + N(6)-ubiquitinyl-[acceptor protein]-L-lysine.. The protein operates within protein modification; protein ubiquitination. Its function is as follows. May play a role in the establishment and maintenance of neuronal transmission and plasticity via its ubiquitin ligase activity. E3 ubiquitin ligases accept ubiquitin from an E2 ubiquitin-conjugating enzyme in the form of a thioester and then directly transfer the ubiquitin to targeted substrates. The protein is E3 ubiquitin-protein ligase znrf2 (znrf2) of Danio rerio (Zebrafish).